Consider the following 344-residue polypeptide: N-acetyl-gamma-glutamyl-phosphate reductase (344 aa).

Cys150 is a catalytic residue.

This sequence belongs to the NAGSA dehydrogenase family. Type 1 subfamily.

The protein resides in the cytoplasm. The catalysed reaction is N-acetyl-L-glutamate 5-semialdehyde + phosphate + NADP(+) = N-acetyl-L-glutamyl 5-phosphate + NADPH + H(+). Its pathway is amino-acid biosynthesis; L-arginine biosynthesis; N(2)-acetyl-L-ornithine from L-glutamate: step 3/4. In terms of biological role, catalyzes the NADPH-dependent reduction of N-acetyl-5-glutamyl phosphate to yield N-acetyl-L-glutamate 5-semialdehyde. The protein is N-acetyl-gamma-glutamyl-phosphate reductase of Pseudomonas fluorescens (strain SBW25).